Reading from the N-terminus, the 690-residue chain is Protein arginine N-methyltransferase 7 (690 aa).

SAM-dependent MTase PRMT-type domains lie at 14-357 (QNSW…YSLW) and 366-690 (TKSV…QKKL).

It belongs to the class I-like SAM-binding methyltransferase superfamily. Protein arginine N-methyltransferase family. PRMT7 subfamily.

In terms of biological role, essential arginine methyltransferase that can both catalyze the formation of omega-N monomethylarginine (MMA) and symmetrical dimethylarginine (sDMA). Specifically mediates the symmetrical dimethylation of arginine residues in the small nuclear ribonucleoproteins SmD1 and SmD3. This is Protein arginine N-methyltransferase 7 (Art7) from Drosophila yakuba (Fruit fly).